The chain runs to 214 residues: Putative ras-related protein Rab-5B (214 aa).

Residue 56–63 coordinates GTP; the sequence is GEMNTGKT. The Effector region motif lies at 77-85; it reads TDSTIGAAF. GTP-binding positions include 103 to 107 and 161 to 164; these read DTAGQ and NKVD.

It belongs to the small GTPase superfamily. Rab family. In terms of processing, this sequence lacks the C-terminal cysteine motifs subject to isoprenylation in other Rab proteins.

This Dictyostelium discoideum (Social amoeba) protein is Putative ras-related protein Rab-5B (rab5B).